A 395-amino-acid polypeptide reads, in one-letter code: MAATMAAQSLLSIPVEYRSQVWCRANLPYPPAPQLPIPAVVDILTKASQALPQISFSWTLIDQPPDGSLFLVWQAPTLPSPPDGMHFMSNERFFNMDVAGKVLEIHEAKHGFYPLSETRTMHVRCRYRLLGVGFDNFWLVHYFQGSETDSIPANISVAKPPHLRRYPLPDVKTSPFLLQEPKKHIPEGTALSQRETLPNMGSAQMKSQSRTPSFSNVTTSPVPPINSNATAQTAEGHMGATNMTVDNMNKPSIPPNGNTSILMQEDLEIEKGDVMDKLSPQQICTARFIKHAEWMSQVLLTLQSVKDIEPPALWQEPNSMEELGKELKDNKEQLVKQDQKYQSLQGDLSYTDSMSNLLKEFSNIKSAEECDVLQKKIEEFAEAKIVPLSHVTERS.

Residues Lys-182 to Thr-230 form a disordered region. The segment covering Ala-190 to Thr-230 has biased composition (polar residues).

This sequence belongs to the SSR4 family. In terms of assembly, component of the RSC complex composed of at least arp9, arp42, rsc1, rsc4, rsc7, rsc9, rsc58, sfh1, snf21, ssr1, ssr2, ssr3 and ssr4. The complex interacts with histone and histone variant components of centromeric chromatin. Component of the SWI/SNF global transcription activator complex composed of at least arp9, arp42, snf5, snf22, snf30, sbf59, sol1, ssr1, ssr2, ssr3, ssr4 and tfg3.

Its subcellular location is the cytoplasm. It localises to the nucleus. In terms of biological role, component of the chromatin structure remodeling complex (RSC), which is involved in transcription regulation and nucleosome positioning. Controls particularly membrane and organelle development genes. Part of the SWI/SNF complex, an ATP-dependent chromatin remodeling complex, required for the positive and negative regulation of gene expression of a large number of genes. It changes chromatin structure by altering DNA-histone contacts within a nucleosome, leading eventually to a change in nucleosome position, thus facilitating or repressing binding of gene-specific transcription factors. In Schizosaccharomyces pombe (strain 972 / ATCC 24843) (Fission yeast), this protein is SWI/SNF and RSC complexes subunit ssr4 (ssr4).